Here is a 232-residue protein sequence, read N- to C-terminus: Large ribosomal subunit protein uL1 (232 aa).

This sequence belongs to the universal ribosomal protein uL1 family. Part of the 50S ribosomal subunit.

Functionally, binds directly to 23S rRNA. The L1 stalk is quite mobile in the ribosome, and is involved in E site tRNA release. Protein L1 is also a translational repressor protein, it controls the translation of the L11 operon by binding to its mRNA. The chain is Large ribosomal subunit protein uL1 from Bordetella bronchiseptica (strain ATCC BAA-588 / NCTC 13252 / RB50) (Alcaligenes bronchisepticus).